The following is a 108-amino-acid chain: MSDITKQPANNISSDDKKEVAKASAKSSVEGAKRKTFYKSRSRKLCHFCAKGILKVDYKDVNTLRKNLNSYAKIVSRRQSGNCNLHQRHVSNAIKKARIMALLPFVKD.

A compositionally biased stretch (polar residues) spans 1–12; that stretch reads MSDITKQPANNI. Residues 1-33 form a disordered region; the sequence is MSDITKQPANNISSDDKKEVAKASAKSSVEGAK.

The protein belongs to the bacterial ribosomal protein bS18 family. In terms of assembly, part of the 30S ribosomal subunit. Forms a tight heterodimer with protein bS6.

Functionally, binds as a heterodimer with protein bS6 to the central domain of the 16S rRNA, where it helps stabilize the platform of the 30S subunit. This is Small ribosomal subunit protein bS18 from Mycoplasmoides gallisepticum (strain R(low / passage 15 / clone 2)) (Mycoplasma gallisepticum).